Here is a 203-residue protein sequence, read N- to C-terminus: DNA-binding transcriptional repressor ScoC (203 aa).

Positions 13–157 (ALVFTQKMAQ…MMCMIRHIYG (145 aa)) constitute an HTH marR-type domain. Positions 63–86 (ISEIAKFGVMHVSTAFNFSKKLEE) form a DNA-binding region, H-T-H motif. The disordered stretch occupies residues 183 to 203 (KKKAKDSAADEPAEELEPVNS). Over residues 191 to 203 (ADEPAEELEPVNS) the composition is skewed to acidic residues.

Homodimer. Interacts with SinR.

Functionally, negative regulator of protease production and sporulation. Acts by binding directly to the promoter of protease genes (aprE and nprE), and by repressing oligopeptide permease operons (appABCDF and oppABCDF), thereby preventing uptake of oligopeptides required for initiation of sporulation. Acts with SinR as a corepressor of epr expression. Binds to non-m6A-5-methylated 5'-GACGAG-3' sites, tested with scpA; when the target is methylated by DnmA, this repressor no longer binds and transcription is up-regulated. The polypeptide is DNA-binding transcriptional repressor ScoC (Bacillus subtilis (strain 168)).